The chain runs to 222 residues: MLKSRIKYNTASFVTSAPDITKLPADTGIEVAFAGRSNAGKSSALNALTDQKLARTSKTPGRTQLINTFELADVDDMRLIDLPGYGFAKVPIEMKKKWQKSLGEYLQKRQSLKGIVILMDIRHPLKDLDRDLINWAISSEIPVLALLTKADKFKQGPRQSQVLKVRRELSALDGDITVHAFSSLKGTGLPDVAKKLDEWFLGPVVAVPPAEKILNDDTNPTS.

The EngB-type G domain maps to 27–202; that stretch reads TGIEVAFAGR…AKKLDEWFLG (176 aa). Residues 35–42, 61–65, 81–84, 148–151, and 181–183 contribute to the GTP site; these read GRSNAGKS, GRTQL, DLPG, TKAD, and FSS. 2 residues coordinate Mg(2+): serine 42 and threonine 63.

This sequence belongs to the TRAFAC class TrmE-Era-EngA-EngB-Septin-like GTPase superfamily. EngB GTPase family. The cofactor is Mg(2+).

Functionally, necessary for normal cell division and for the maintenance of normal septation. The protein is Probable GTP-binding protein EngB of Pseudoalteromonas translucida (strain TAC 125).